Reading from the N-terminus, the 847-residue chain is Zinc transporter ZIP10 (847 aa).

The signal sequence occupies residues 1–26 (MMRVHTHTRLCFLCVLTLLYHQCSHC). The disordered stretch occupies residues 136 to 374 (GRHSHSAGHP…RREVPGSPAH (239 aa)). The span at 162 to 171 (HHENEEHTLA) shows a compositional bias: basic and acidic residues. A compositionally biased stretch (polar residues) spans 179–188 (TLGTGATPPS). A compositionally biased stretch (basic and acidic residues) spans 190–269 (SEEHDHDHEH…QEHNDLSDQN (80 aa)). 2 stretches are compositionally biased toward basic residues: residues 270 to 285 (HHHH…HPHL) and 314 to 330 (TRRH…RGRN). Asn385 is a glycosylation site (N-linked (GlcNAc...) asparagine). The next 3 helical transmembrane spans lie at 447–467 (FVSI…VPIL), 474–494 (FLLT…ALLH), and 529–549 (GLTA…IGMF). The segment at 613 to 676 (ELQPLDSPSK…HSHHGHCHSD (64 aa)) is disordered. The segment covering 629–646 (DSDHPYEAPVKTEEDNVP) has biased composition (basic and acidic residues). Over residues 648 to 672 (AKSKKHGHGHGHGHGHGHGHSHHGH) the composition is skewed to basic residues. 4 helical membrane passes run 705 to 725 (AIGA…VAVF), 750 to 770 (IVYN…GTAV), 779 to 799 (SWIF…DMLP), and 817 to 837 (FVLQ…IAIF).

This sequence belongs to the ZIP transporter (TC 2.A.5) family. Undergoes N-terminal ectodomain shedding.

The protein localises to the cell membrane. It is found in the apical cell membrane. It carries out the reaction Zn(2+)(in) = Zn(2+)(out). Its function is as follows. Zinc-influx transporter. When associated with slc39a6, the heterodimer slc39a10/slc39a6 has a functional role in epithelial-mesenchymal transition (EMT) during embryonic development. Slc39a10/slc39a6 heterodimers play also an essentiel role in initiating mitosis by importing zinc into cells to initiate a pathway resulting in the onset of mitosis. When associated with slc39a6, the heterodimer controls Ncam1 phosphorylation and integration into focal adhesion complexes during EMT. The protein is Zinc transporter ZIP10 of Danio rerio (Zebrafish).